The sequence spans 342 residues: S-adenosylmethionine:tRNA ribosyltransferase-isomerase (342 aa).

Belongs to the QueA family. As to quaternary structure, monomer.

The protein resides in the cytoplasm. It carries out the reaction 7-aminomethyl-7-carbaguanosine(34) in tRNA + S-adenosyl-L-methionine = epoxyqueuosine(34) in tRNA + adenine + L-methionine + 2 H(+). It functions in the pathway tRNA modification; tRNA-queuosine biosynthesis. Functionally, transfers and isomerizes the ribose moiety from AdoMet to the 7-aminomethyl group of 7-deazaguanine (preQ1-tRNA) to give epoxyqueuosine (oQ-tRNA). The polypeptide is S-adenosylmethionine:tRNA ribosyltransferase-isomerase (Campylobacter jejuni subsp. jejuni serotype O:6 (strain 81116 / NCTC 11828)).